The following is a 429-amino-acid chain: UDP-N-acetylglucosamine 1-carboxyvinyltransferase (429 aa).

Residue 22–23 coordinates phosphoenolpyruvate; sequence KN. A UDP-N-acetyl-alpha-D-glucosamine-binding site is contributed by R102. Residue C126 is the Proton donor of the active site. C126 bears the 2-(S-cysteinyl)pyruvic acid O-phosphothioketal mark. Residues D316 and I338 each coordinate UDP-N-acetyl-alpha-D-glucosamine.

The protein belongs to the EPSP synthase family. MurA subfamily.

The protein localises to the cytoplasm. It carries out the reaction phosphoenolpyruvate + UDP-N-acetyl-alpha-D-glucosamine = UDP-N-acetyl-3-O-(1-carboxyvinyl)-alpha-D-glucosamine + phosphate. Its pathway is cell wall biogenesis; peptidoglycan biosynthesis. Functionally, cell wall formation. Adds enolpyruvyl to UDP-N-acetylglucosamine. This Methylorubrum extorquens (strain PA1) (Methylobacterium extorquens) protein is UDP-N-acetylglucosamine 1-carboxyvinyltransferase.